We begin with the raw amino-acid sequence, 473 residues long: Ribosomal protein uS12 methylthiotransferase RimO (473 aa).

One can recognise an MTTase N-terminal domain in the interval 30-141 (ASVAVLHLGC…IVQIIERVER (112 aa)). 6 residues coordinate [4Fe-4S] cluster: C39, C75, C104, C179, C183, and C186. In terms of domain architecture, Radical SAM core spans 165–394 (TTHAPVAYLR…MQVQQGITFR (230 aa)). A TRAM domain is found at 397-463 (REQVGRVVPV…PYDLFGQVVA (67 aa)).

This sequence belongs to the methylthiotransferase family. RimO subfamily. The cofactor is [4Fe-4S] cluster.

Its subcellular location is the cytoplasm. It carries out the reaction L-aspartate(89)-[ribosomal protein uS12]-hydrogen + (sulfur carrier)-SH + AH2 + 2 S-adenosyl-L-methionine = 3-methylsulfanyl-L-aspartate(89)-[ribosomal protein uS12]-hydrogen + (sulfur carrier)-H + 5'-deoxyadenosine + L-methionine + A + S-adenosyl-L-homocysteine + 2 H(+). Functionally, catalyzes the methylthiolation of an aspartic acid residue of ribosomal protein uS12. The sequence is that of Ribosomal protein uS12 methylthiotransferase RimO from Synechococcus sp. (strain JA-2-3B'a(2-13)) (Cyanobacteria bacterium Yellowstone B-Prime).